Here is a 331-residue protein sequence, read N- to C-terminus: UPF0324 membrane protein SA0329 (331 aa).

A run of 11 helical transmembrane segments spans residues 9-26 (FMIG…SFLA), 31-48 (ILDK…AILY), 69-88 (LLRF…DIIG), 93-115 (LLAI…NKLL), 122-144 (ALLL…APIF), 154-176 (SIGI…YAIF), 183-202 (YGAW…LAGG), 217-234 (LGRV…ILIM), 247-269 (ISIP…VTIP), 273-295 (LNIL…GLNV), and 308-330 (LMTI…HWLY).

This sequence belongs to the UPF0324 family.

Its subcellular location is the cell membrane. This is UPF0324 membrane protein SA0329 from Staphylococcus aureus (strain N315).